A 71-amino-acid polypeptide reads, in one-letter code: Gas vesicle protein A (71 aa).

Residues 12-22 (LAEVIDRILDK) are alpha helix 1. Residues 26–34 (IDAWARVSL) are beta-strand 1. The beta turn stretch occupies residues 35 to 37 (VGI). Residues 38-46 (ELLAIEARV) are beta-strand 2. The tract at residues 51-70 (VETYLKYAEAVGLTQXAXXA) is alpha helix 2.

Belongs to the gas vesicle GvpA family. As to quaternary structure, the gas vesicle shell is 2 nm thick and consists of a single layer of this protein. It forms helical ribs nearly perpendicular to the long axis of the vesicle.

It localises to the gas vesicle shell. Gas vesicles are hollow, gas filled proteinaceous nanostructures found in some microorganisms. During planktonic growth they allow positioning of the organism at a favorable depth for light or nutrient acquisition. GvpA forms the protein shell. This chain is Gas vesicle protein A, found in Microcystis sp. (strain BC 84/1).